Reading from the N-terminus, the 792-residue chain is Ribonucleoside-diphosphate reductase large subunit (792 aa).

The region spanning 1–92 (MHVIKRDGRQ…VSNLHKETKK (92 aa)) is the ATP-cone domain. ATP-binding positions include 5 to 6 (KR), 11 to 17 (ERVMFDK), Thr53, and Asp57. The residue at position 17 (Lys17) is an N6-acetyllysine. GDP contacts are provided by Ser202 and Ser217. Residues Cys218 and Cys444 are joined by a disulfide bond. Residues 226 to 228 (DSI), Lys243, Arg256, and 263 to 264 (AG) each bind dTTP. An N6-acetyllysine modification is found at Lys376. GDP is bound at residue Asn427. The active-site Proton acceptor is the Asn427. The active-site Cysteine radical intermediate is Cys429. Residues Glu431 and 604-607 (TAST) each bind GDP. The active-site Proton acceptor is Glu431. Residue Thr751 is modified to Phosphothreonine.

The protein belongs to the ribonucleoside diphosphate reductase large chain family. Heterodimer of a large and a small subunit. Heterodimer with small subunit RRM2 or RRM2B. The heterodimer with RRM2 has higher catalytic activity than the heterodimer with RRM2B. Interacts with AHCYL1 which inhibits its activity.

It is found in the cytoplasm. It carries out the reaction a 2'-deoxyribonucleoside 5'-diphosphate + [thioredoxin]-disulfide + H2O = a ribonucleoside 5'-diphosphate + [thioredoxin]-dithiol. Its activity is regulated as follows. Under complex allosteric control mediated by deoxynucleoside triphosphates and ATP binding to separate specificity and activation sites on the M1 subunit. The type of nucleotide bound at the specificity site determines substrate preference. It seems probable that ATP makes the enzyme reduce CDP and UDP, dGTP favors ADP reduction and dTTP favors GDP reduction. Stimulated by ATP and inhibited by dATP binding to the activity site, the dATP inhibition is mediated by AHCYL1 which stabilizes dATP in the site. Its function is as follows. Provides the precursors necessary for DNA synthesis. Catalyzes the biosynthesis of deoxyribonucleotides from the corresponding ribonucleotides. The protein is Ribonucleoside-diphosphate reductase large subunit (RRM1) of Homo sapiens (Human).